An 85-amino-acid polypeptide reads, in one-letter code: Large ribosomal subunit protein bL27 (85 aa).

Residues 1 to 22 are disordered; the sequence is MAHKKAGGSTRNGRDSESKRLG.

It belongs to the bacterial ribosomal protein bL27 family.

This Teredinibacter turnerae (strain ATCC 39867 / T7901) protein is Large ribosomal subunit protein bL27.